The primary structure comprises 164 residues: Transcriptional repressor NrdR (164 aa).

The segment at 3–34 (CPKCNYHKSSVVDSRQAEDGNTIRRRRECEQC) is a zinc-finger region. Residues 49-139 (LLVIKKDGTR…VYKSFKDVDE (91 aa)) form the ATP-cone domain.

It belongs to the NrdR family. Zn(2+) serves as cofactor.

In terms of biological role, negatively regulates transcription of bacterial ribonucleotide reductase nrd genes and operons by binding to NrdR-boxes. This Streptococcus pyogenes serotype M6 (strain ATCC BAA-946 / MGAS10394) protein is Transcriptional repressor NrdR.